Reading from the N-terminus, the 331-residue chain is RNA 3'-terminal phosphate cyclase (331 aa).

Residues glutamine 100 and 276–280 each bind ATP; that span reads HLADQ. Histidine 301 acts as the Tele-AMP-histidine intermediate in catalysis.

The protein belongs to the RNA 3'-terminal cyclase family. Type 1 subfamily.

The protein resides in the cytoplasm. The catalysed reaction is a 3'-end 3'-phospho-ribonucleotide-RNA + ATP = a 3'-end 2',3'-cyclophospho-ribonucleotide-RNA + AMP + diphosphate. Its function is as follows. Catalyzes the conversion of 3'-phosphate to a 2',3'-cyclic phosphodiester at the end of RNA. The mechanism of action of the enzyme occurs in 3 steps: (A) adenylation of the enzyme by ATP; (B) transfer of adenylate to an RNA-N3'P to produce RNA-N3'PP5'A; (C) and attack of the adjacent 2'-hydroxyl on the 3'-phosphorus in the diester linkage to produce the cyclic end product. The biological role of this enzyme is unknown but it is likely to function in some aspects of cellular RNA processing. In Methanococcoides burtonii (strain DSM 6242 / NBRC 107633 / OCM 468 / ACE-M), this protein is RNA 3'-terminal phosphate cyclase.